A 249-amino-acid chain; its full sequence is (S)-1-Phenylethanol dehydrogenase (249 aa).

Residues 17–19 (NGI), Asp-38, 61–63 (CDV), Asn-89, and Tyr-93 contribute to the NAD(+) site. Position 141 (Ser-141) interacts with substrate. Tyr-154 functions as the Proton acceptor in the catalytic mechanism. Residues Lys-158, 184–187 (PSLV), and Thr-191 each bind NAD(+).

This sequence belongs to the short-chain dehydrogenases/reductases (SDR) family. Homotetramer.

It carries out the reaction (S)-1-phenylethanol + NAD(+) = acetophenone + NADH + H(+). Functionally, catalyzes the NAD-dependent stereospecific oxidation of (S)-1-phenylethanol to acetophenone in the degradation of ethylbenzene. The chain is (S)-1-Phenylethanol dehydrogenase (ped) from Aromatoleum aromaticum (strain DSM 19018 / LMG 30748 / EbN1) (Azoarcus sp. (strain EbN1)).